The following is a 1507-amino-acid chain: Nonribosomal peptide synthetase ataP (1507 aa).

The Carrier 1 domain maps to 1 to 72 (MQINIRNEIA…DIISRSTGMY (72 aa)). Serine 33 is subject to O-(pantetheine 4'-phosphoryl)serine. Residues 98–119 (TPSPSPSGPSTGCPTPDTLDTT) are disordered. Low complexity predominate over residues 105–115 (GPSTGCPTPDT). The interval 163–429 (TRMAWQQVLE…NRVFRQLVQL (267 aa)) is condensation 1. The adenylation stretch occupies residues 514–893 (AAAENPEACA…GRNDRQIKLR (380 aa)). One can recognise a Carrier 2 domain in the interval 988–1065 (NEMSPTEQRV…DLSQRIDKLQ (78 aa)). Position 1025 is an O-(pantetheine 4'-phosphoryl)serine (serine 1025). The condensation 2 stretch occupies residues 1099–1471 (TSNTSFTVSF…MTALRLLIKN (373 aa)).

Belongs to the NRP synthetase family.

Its pathway is mycotoxin biosynthesis. Nonribosomal peptide synthetase; part of the gene cluster that mediates the biosynthesis of acetylaranotin, a member of the epipolythiodioxopiperazine (ETP) class of toxins characterized by a disulfide-bridged cyclic dipeptide. The first step of acetylaranotin biosynthesis is performed by the NRPS ataP which produces diketopiperazine cyclo-L-Phe-L-Phe via the condensation of 2 phenylalanines (L-Phe). The ataC domain of ataTC then catalyzes the formation of bishydroxylation of cyclo-L-Phe-L-Phe. The glutathione S-transferase domain ataG in ataIMG further catalyzes the conjugation of two glutathiones to the bishydroxylated intermediate. Next, the dipeptidase ataJ removes the Glu residues. The following step is performed by the carbon sulfur lyase domain ataI of ataIMG which may convert the bis-cysteinyl adduct to yield an epidithiol intermediate. The ataT domain from ataTC then catalyzes the oxidation of the free dithiols, followed by a cyclization step catalyzed by the cytochrome P450 ataF. AtaF probably acts as an epoxidase to promote a dual epoxidation formation at C8 and C9 along with C8' and C9', followed by the spontaneous nucleophilic attack of the amide nitrogens N10 and N10' to yield an intermediate with the pyrrolidine partial structure. The final steps of acetylaranotin biosynthesis involve the acetylation and ring rearrangement of an epitetrathiodiketopiperazine intermediate to produce acetylaranotin. AtaH probably catalyzes the acetylation of epitetrathiodiketopiperazine to produce a diacetate and ataY is responsible for the formation of the dihydrooxepin moiety that converts the diacetate intermediate to acetylaranotin via acetylapoaranotin. Both enzymes could function independently in the absence of the other. The acetylaranotin bis-thiomethyltransferase ataS located outside of acetylaranotin gene cluster is the main thiomethyltransferase responsible for converting acetylaranotin and its related intermediates to their methylated forms. This Aspergillus terreus (strain NIH 2624 / FGSC A1156) protein is Nonribosomal peptide synthetase ataP.